A 325-amino-acid chain; its full sequence is Intelectin-2 (325 aa).

The first 26 residues, 1–26 (MLSMLRTMTRLCFLLFFSVATSGCSA), serve as a signal peptide directing secretion. The Fibrinogen C-terminal domain occupies 44–267 (FSFSSLPRSC…AANALCAGIK (224 aa)). Cys-53 and Cys-82 are oxidised to a cystine. 7 residues coordinate Ca(2+): His-98, Glu-99, Asp-101, Gly-104, Gly-109, Asp-110, and Asp-145. 3 cysteine pairs are disulfide-bonded: Cys-106–Cys-292, Cys-211–Cys-271, and Cys-263–Cys-277. Positions 272, 274, and 294 each coordinate Ca(2+). Position 274–275 (274–275 (EH)) interacts with a carbohydrate.

Expressed only in the small intestine.

The protein localises to the secreted. Functionally, may play a role in the defense system against pathogens. In Homo sapiens (Human), this protein is Intelectin-2 (ITLN2).